Consider the following 67-residue polypeptide: Conotoxin Cal6.35 (67 aa).

The first 22 residues, 1–22 (MKLTCVLIVAVLILTACQVIAA), serve as a signal peptide directing secretion. Cystine bridges form between C43/C53, C46/C59, and C52/C66.

The protein belongs to the conotoxin O1 superfamily. As to expression, expressed by the venom duct.

Its subcellular location is the secreted. Its function is as follows. Probable neurotoxin. The sequence is that of Conotoxin Cal6.35 from Californiconus californicus (California cone).